The sequence spans 157 residues: Nuclear cap-binding protein subunit 2 (157 aa).

MRNA-binding positions include tyrosine 17, tyrosine 40, 109-113 (RADWD), 120-124 (RQYGR), and 130-131 (QV). Residues 37 to 115 (CTLYVGNLSY…RVIRADWDAG (79 aa)) form the RRM domain.

The protein belongs to the RRM NCBP2 family. Component of the nuclear cap-binding complex (CBC), a heterodimer composed of ncbp-1 and ncbp-2 that interacts with m7GpppG-capped RNA.

Its subcellular location is the nucleus. In terms of biological role, component of the cap-binding complex (CBC), which binds co-transcriptionally to the 5' cap of pre-mRNAs and is involved in various processes such as pre-mRNA splicing and RNA-mediated gene silencing (RNAi). The CBC complex is involved in miRNA-mediated RNA interference and is required for primary microRNAs (miRNAs) processing. In the CBC complex, ncbp-2 recognizes and binds capped RNAs (m7GpppG-capped RNA) but requires ncbp-1 to stabilize the movement of its N-terminal loop and lock the CBC into a high affinity cap-binding state with the cap structure. This chain is Nuclear cap-binding protein subunit 2 (ncbp-2), found in Caenorhabditis briggsae.